Here is a 370-residue protein sequence, read N- to C-terminus: UDP-N-acetylglucosamine--N-acetylmuramyl-(pentapeptide) pyrophosphoryl-undecaprenol N-acetylglucosamine transferase (370 aa).

Residues 10-12 (TGG), Asn126, Ser200, Ile255, and Gln300 contribute to the UDP-N-acetyl-alpha-D-glucosamine site.

The protein belongs to the glycosyltransferase 28 family. MurG subfamily.

Its subcellular location is the cell membrane. The enzyme catalyses Mur2Ac(oyl-L-Ala-gamma-D-Glu-L-Lys-D-Ala-D-Ala)-di-trans,octa-cis-undecaprenyl diphosphate + UDP-N-acetyl-alpha-D-glucosamine = beta-D-GlcNAc-(1-&gt;4)-Mur2Ac(oyl-L-Ala-gamma-D-Glu-L-Lys-D-Ala-D-Ala)-di-trans,octa-cis-undecaprenyl diphosphate + UDP + H(+). The protein operates within cell wall biogenesis; peptidoglycan biosynthesis. Functionally, cell wall formation. Catalyzes the transfer of a GlcNAc subunit on undecaprenyl-pyrophosphoryl-MurNAc-pentapeptide (lipid intermediate I) to form undecaprenyl-pyrophosphoryl-MurNAc-(pentapeptide)GlcNAc (lipid intermediate II). This Lactobacillus johnsonii (strain CNCM I-12250 / La1 / NCC 533) protein is UDP-N-acetylglucosamine--N-acetylmuramyl-(pentapeptide) pyrophosphoryl-undecaprenol N-acetylglucosamine transferase.